Reading from the N-terminus, the 277-residue chain is Phosphate import ATP-binding protein PstB 2 (277 aa).

Positions 31–272 constitute an ABC transporter domain; it reads IEVPGLNLFY…PAKKQTEDYI (242 aa). ATP is bound at residue 63–70; it reads GPSGCGKS.

This sequence belongs to the ABC transporter superfamily. Phosphate importer (TC 3.A.1.7) family. As to quaternary structure, the complex is composed of two ATP-binding proteins (PstB), two transmembrane proteins (PstC and PstA) and a solute-binding protein (PstS).

It is found in the cell inner membrane. The enzyme catalyses phosphate(out) + ATP + H2O = ADP + 2 phosphate(in) + H(+). Part of the ABC transporter complex PstSACB involved in phosphate import. Responsible for energy coupling to the transport system. The sequence is that of Phosphate import ATP-binding protein PstB 2 from Pseudomonas syringae pv. syringae (strain B728a).